A 679-amino-acid chain; its full sequence is Leucine-rich repeat, immunoglobulin-like domain and transmembrane domain-containing protein 3 (679 aa).

Positions 1–19 (MHLFACLCIVLSFLEGVGC) are cleaved as a signal peptide. The Lumenal segment spans residues 20–582 (LCPSQCTCDY…RVEGDDSQWS (563 aa)). LRR repeat units follow at residues 56 to 79 (PVDT…AFYY), 80 to 103 (LVEL…SFYN), 104 to 128 (LKQL…LLDM), 129 to 151 (PLLR…ALRY), and 152 to 175 (LKNL…FLES). In terms of domain architecture, LRRCT spans 201 to 253 (NPWFCDCHISKMIELSKVVDPAIVLLDPLMTCSEPERLTGILFQRAELEHCLK). The 91-residue stretch at 254-344 (PSVMTSATKI…GMSEAVVTVT (91 aa)) folds into the Ig-like domain. Cys275 and Cys328 form a disulfide bridge. Asn296 is a glycosylation site (N-linked (GlcNAc...) asparagine). The interval 351 to 375 (TPIPPDTSERTGDHPEWDVQPGSGR) is disordered. Over residues 357-367 (TSERTGDHPEW) the composition is skewed to basic and acidic residues. Positions 486-574 (AIENLRVVSE…QCITFSTERV (89 aa)) constitute a Fibronectin type-III domain. Residues 583–603 (LLLVVTSTACVVILPLICFLL) traverse the membrane as a helical segment. Over 604–679 (YKVCKLQCKS…SEGSRPEYYC (76 aa)) the chain is Cytoplasmic.

Glycosylated. In terms of tissue distribution, detected in the outer plexiform layer (OPL) of the retina where it localizes to ON-bipolar cells (at protein level).

The protein localises to the cell projection. Its subcellular location is the dendrite. The protein resides in the perikaryon. It is found in the endoplasmic reticulum membrane. Functionally, plays a role in the synapse formation and synaptic transmission between cone photoreceptor cells and retinal bipolar cells. Required for normal transmission of a light-evoked stimulus from the cone photoreceptor cells to the ON-bipolar cells and ON-ganglion cells in the inner retina. Required in retinal ON-bipolar cells for normal localization of the cation channel TRPM1 at dendrite tips. Seems to play a specific role in synaptic contacts made by ON-bipolar cells with cone photoreceptor pedicles. May also have a role in cone synapse formation. Might facilitate FGFR1 exit from the endoplasmic reticulum to the Golgi. Could be a regulator of the FGFRs. The polypeptide is Leucine-rich repeat, immunoglobulin-like domain and transmembrane domain-containing protein 3 (LRIT3) (Homo sapiens (Human)).